The following is a 316-amino-acid chain: Endochitinase WIN8 (316 aa).

Residues methionine 1–threonine 23 form the signal peptide. One can recognise a Chitin-binding type-1 domain in the interval alanine 24–asparagine 64. Disulfide bonds link cysteine 26-cysteine 41, cysteine 35-cysteine 47, cysteine 40-cysteine 54, cysteine 58-cysteine 62, cysteine 84-cysteine 146, cysteine 158-cysteine 168, and cysteine 266-cysteine 298. Catalysis depends on glutamate 128, which acts as the Proton donor.

It belongs to the glycosyl hydrolase 19 family. Chitinase class I subfamily.

It carries out the reaction Random endo-hydrolysis of N-acetyl-beta-D-glucosaminide (1-&gt;4)-beta-linkages in chitin and chitodextrins.. Functionally, defense against chitin-containing fungal pathogens. The chain is Endochitinase WIN8 (WIN8) from Populus trichocarpa (Western balsam poplar).